A 138-amino-acid polypeptide reads, in one-letter code: Single-stranded DNA-binding protein 4 (138 aa).

The 104-residue stretch at 1 to 104 (MINNVVLIGR…VVADSFQILE (104 aa)) folds into the SSB domain. A disordered region spans residues 107–138 (DNSTNQASMDDQLPPSFGNSQPMDISDDDLPF). Positions 133-138 (DDDLPF) match the Important for interaction with partner proteins motif.

In terms of assembly, homotetramer.

In terms of biological role, plays an important role in DNA replication, recombination and repair. Binds to ssDNA and to an array of partner proteins to recruit them to their sites of action during DNA metabolism. The polypeptide is Single-stranded DNA-binding protein 4 (ssb4) (Streptococcus agalactiae serotype V (strain ATCC BAA-611 / 2603 V/R)).